The sequence spans 121 residues: Small ribosomal subunit protein uS13 (121 aa).

The segment at R98–K121 is disordered. Basic residues predominate over residues V109 to K121.

The protein belongs to the universal ribosomal protein uS13 family. Part of the 30S ribosomal subunit. Forms a loose heterodimer with protein S19. Forms two bridges to the 50S subunit in the 70S ribosome.

In terms of biological role, located at the top of the head of the 30S subunit, it contacts several helices of the 16S rRNA. In the 70S ribosome it contacts the 23S rRNA (bridge B1a) and protein L5 of the 50S subunit (bridge B1b), connecting the 2 subunits; these bridges are implicated in subunit movement. Contacts the tRNAs in the A and P-sites. This is Small ribosomal subunit protein uS13 from Phytoplasma australiense.